A 442-amino-acid chain; its full sequence is Protein PhoH2 (442 aa).

The region spanning 3–135 is the PINc domain; it reads KIYVLDTNVL…LVSKDVLVRV (133 aa). 259–266 lines the ATP pocket; the sequence is GKAGTGKT.

This sequence in the N-terminal section; belongs to the PINc/VapC protein family. The protein in the C-terminal section; belongs to the PhoH family.

It catalyses the reaction n ATP + n H2O + wound RNA = n ADP + n phosphate + unwound RNA.. The catalysed reaction is ATP + H2O = ADP + phosphate + H(+). It carries out the reaction GTP + H2O = GDP + phosphate + H(+). Functionally, unwinds and/or cleaves 5'-tailed RNA in vitro. Has ATPase and GTPase activities. Unlike the protein in mycobacteria there does not seem to be an antitoxin gene upstream, suggesting this is not a toxin-antitoxin system. This chain is Protein PhoH2, found in Bacillus subtilis (strain 168).